The following is a 621-amino-acid chain: MSAPTIPGLEGNAPTTNQDMLNWIAECAELCQPDKVVFCDGSDEEWEAIAKDLVEKGTLIKLNEEKRPNSYLASSDPADVARVESRTFICSKTEDGAGPTNNWRDPDEMRAEMSEHFKGSMKGRTMYVVPFCMGPITDPDPKLGIELTDSGYVVMSMRIMTRMGKEALDKIGDGPFVKGLHSVGAPLEPGQEDVKWPCNETKYITQFPEDRVIWSYGSGYGGNAILAKKCYALRIASVMAKDEGWMAEHMLILKLISPEGKAYHICAAFPSQCGKTNLAMIQPTIPGWKAEVIGDDIAWLHFGDDGRLYAVNPENGFFGVAPGTNYKSNPNAMKTMEAGNNIFTNVALTDDGDVWWEGLENEPDHLIDWKGKDWTPDEDCLSSHPNSRYCVPIEQCPVAAPEFNDPKGVPVDAILFGGRRPDTVPLVTEAIDWQHATFIGATLASGQTAAAAEAKVGTLRYDPMAMLPFIGYNVGDYLQHWLDIGKKGGDKLPKVFLVNWFRRGDDGRFLWPGFGENSRVLKWIVDRIEGRVDAKKTVVGYTAYSKDIDIDGLDTDPKDVKAALTAPADKWQMDLSDTEDWLKSLGPKVPQEIWDEFDFLKTRIKTANKDGNKALDNMKTK.

Substrate contacts are provided by residues arginine 82 and 220-222 (YGG). Mn(2+) contacts are provided by lysine 229 and histidine 249. Serine 271 is a binding site for substrate. Residue 272–277 (QCGKTN) coordinates GTP. Cysteine 273 is an active-site residue. Aspartate 296 lines the Mn(2+) pocket. 386-388 (NSR) serves as a coordination point for substrate. GTP contacts are provided by residues arginine 388, arginine 419, and 514–517 (FGEN).

It belongs to the phosphoenolpyruvate carboxykinase [GTP] family. As to quaternary structure, monomer. It depends on Mn(2+) as a cofactor.

Its subcellular location is the cytoplasm. It carries out the reaction oxaloacetate + GTP = phosphoenolpyruvate + GDP + CO2. It functions in the pathway carbohydrate biosynthesis; gluconeogenesis. In terms of biological role, catalyzes the conversion of oxaloacetate (OAA) to phosphoenolpyruvate (PEP), the rate-limiting step in the metabolic pathway that produces glucose from lactate and other precursors derived from the citric acid cycle. This Corynebacterium kroppenstedtii (strain DSM 44385 / JCM 11950 / CIP 105744 / CCUG 35717) protein is Phosphoenolpyruvate carboxykinase [GTP].